The sequence spans 246 residues: Carboxylesterase (246 aa).

Catalysis depends on S93, which acts as the Nucleophile. Active-site charge relay system residues include D192 and H222.

This sequence belongs to the lipase/esterase LIP3/BchO family. As to quaternary structure, homodimer.

The catalysed reaction is a carboxylic ester + H2O = an alcohol + a carboxylate + H(+). Functionally, involved in the detoxification of xenobiotics. Shows maximal activity with C6 substrates, with gradually decreasing activity from C8 to C12 substrates. No activity for higher chain length substrates acids rather than long-chain ones. The sequence is that of Carboxylesterase (est) from Bacillus subtilis (strain 168).